Here is a 296-residue protein sequence, read N- to C-terminus: Ribonuclease HIII (296 aa).

Positions 80-296 (LALIGSDEVG…NTKKAYQRLK (217 aa)) constitute an RNase H type-2 domain. A divalent metal cation-binding residues include D86, E87, and D191.

Belongs to the RNase HII family. RnhC subfamily. Mn(2+) is required as a cofactor. It depends on Mg(2+) as a cofactor.

It localises to the cytoplasm. The catalysed reaction is Endonucleolytic cleavage to 5'-phosphomonoester.. Functionally, endonuclease that specifically degrades the RNA of RNA-DNA hybrids. In Streptococcus thermophilus (strain ATCC BAA-250 / LMG 18311), this protein is Ribonuclease HIII.